Consider the following 201-residue polypeptide: Recombination protein RecR (201 aa).

The segment at 60-75 (CSCCGNVDTIDPCTVC) adopts a C4-type zinc-finger fold. In terms of domain architecture, Toprim spans 83 to 178 (SVIIVVEDVS…KITRLAHGVP (96 aa)).

This sequence belongs to the RecR family.

Functionally, may play a role in DNA repair. It seems to be involved in an RecBC-independent recombinational process of DNA repair. It may act with RecF and RecO. The sequence is that of Recombination protein RecR from Agrobacterium fabrum (strain C58 / ATCC 33970) (Agrobacterium tumefaciens (strain C58)).